The primary structure comprises 241 residues: Nicotinamide riboside kinase (241 aa).

21-29 (GCSSSGKST) lines the ATP pocket. Ser-28 and Asp-47 together coordinate Mg(2+). The Proton acceptor role is filled by Asp-47. Substrate is bound by residues 47–50 (DDFY), 67–68 (WD), and Asp-68. An ATP-binding site is contributed by Arg-163. Arg-164 contributes to the substrate binding site. ATP is bound by residues Arg-167, 167–169 (RGG), and 213–215 (DVQ). A substrate-binding site is contributed by 169–170 (GY).

This sequence belongs to the uridine kinase family. NRK subfamily.

The enzyme catalyses beta-nicotinamide D-riboside + ATP = beta-nicotinamide D-ribonucleotide + ADP + H(+). It carries out the reaction beta-D-ribosylnicotinate + ATP = nicotinate beta-D-ribonucleotide + ADP + H(+). Its pathway is cofactor biosynthesis; NAD(+) biosynthesis. Catalyzes the phosphorylation of nicotinamide riboside (NR) and nicotinic acid riboside (NaR) to form nicotinamide mononucleotide (NMN) and nicotinic acid mononucleotide (NaMN). This Eremothecium gossypii (strain ATCC 10895 / CBS 109.51 / FGSC 9923 / NRRL Y-1056) (Yeast) protein is Nicotinamide riboside kinase (NRK1).